The following is a 202-amino-acid chain: Heat shock 22 kDa protein, mitochondrial (202 aa).

Residues 1–31 (MASSLALKRFLSSGLLSSSFLRPVASSASRS) constitute a mitochondrion transit peptide. The sHSP domain occupies 94–202 (VLSAASRRGW…RNNVINVKVD (109 aa)).

It belongs to the small heat shock protein (HSP20) family.

The protein localises to the mitochondrion. The protein is Heat shock 22 kDa protein, mitochondrial (HSP22) of Pisum sativum (Garden pea).